Consider the following 326-residue polypeptide: N-acetyl-gamma-glutamyl-phosphate reductase (326 aa).

The active site involves Cys155.

It belongs to the NAGSA dehydrogenase family. Type 1 subfamily.

The protein resides in the cytoplasm. The enzyme catalyses N-acetyl-L-glutamate 5-semialdehyde + phosphate + NADP(+) = N-acetyl-L-glutamyl 5-phosphate + NADPH + H(+). The protein operates within amino-acid biosynthesis; L-arginine biosynthesis; N(2)-acetyl-L-ornithine from L-glutamate: step 3/4. Catalyzes the NADPH-dependent reduction of N-acetyl-5-glutamyl phosphate to yield N-acetyl-L-glutamate 5-semialdehyde. The protein is N-acetyl-gamma-glutamyl-phosphate reductase of Shewanella oneidensis (strain ATCC 700550 / JCM 31522 / CIP 106686 / LMG 19005 / NCIMB 14063 / MR-1).